Reading from the N-terminus, the 243-residue chain is Cell surface glycoprotein CD200 receptor 1-B (243 aa).

The Cytoplasmic portion of the chain corresponds to 1–29; the sequence is MEISQQAGWCKKPASPMNTRAALEAVRNT. The helical; Signal-anchor for type II membrane protein transmembrane segment at 30 to 47 threads the bilayer; that stretch reads AWTIVLLTSAAVMGASGI. Positions 47-146 constitute an Ig-like V-type domain; the sequence is ISRVSANLGH…GNFHYLYHLT (100 aa). At 48-243 the chain is on the lumenal side; the sequence is SRVSANLGHS…LAQLPGGSAP (196 aa). 2 disulfide bridges follow: C62–C130 and C165–C214. N64, N67, N127, N193, N222, and N228 each carry an N-linked (GlcNAc...) asparagine glycan. The Ig-like C2-type domain maps to 144–228; the sequence is HLTVLVAPRM…ATLNETRSIN (85 aa).

This sequence belongs to the CD200R family. As to expression, expressed in peripheral blood lymphocytes (PBL) and peripheral blood mononuclear cells (PBMC).

It is found in the membrane. The polypeptide is Cell surface glycoprotein CD200 receptor 1-B (CD200R1B) (Gallus gallus (Chicken)).